Consider the following 132-residue polypeptide: Small integral membrane protein 33 (132 aa).

A disordered region spans residues 1–28 (MHQAGHYSWPSPAVNSSSEQEPQRQLPE). N-linked (GlcNAc...) asparagine glycosylation occurs at N15. The helical transmembrane segment at 43-63 (PVVTVIVAVFVLLAVCIIVAV) threads the bilayer. A disordered region spans residues 99 to 132 (PQDSPEEAPPGPLVPGSCPAPDGPRPSIDEVTCL).

The protein localises to the membrane. In Homo sapiens (Human), this protein is Small integral membrane protein 33.